An 838-amino-acid chain; its full sequence is V-type proton ATPase 116 kDa subunit a 1 (838 aa).

Over Met1–Glu388 the chain is Cytoplasmic. Phosphothreonine is present on residues Thr250 and Thr360. Tyr364 is modified (phosphotyrosine). A helical transmembrane segment spans residues Ile389–Phe407. Residues Gly408 to Asp409 lie on the Vacuolar side of the membrane. Residues Leu410–Lys426 traverse the membrane as a helical segment. At Glu427 to Ser441 the chain is on the cytoplasmic side. A helical transmembrane segment spans residues Thr442–Ser471. Topologically, residues Leu472–Ser535 are vacuolar. A helical membrane pass occupies residues Phe536–Leu555. Over Ser556–Phe573 the chain is Cytoplasmic. The chain crosses the membrane as a helical span at residues Ile574 to Lys594. Residues Trp595–Phe639 are Vacuolar-facing. Residues Leu640–Leu659 traverse the membrane as a helical segment. The Cytoplasmic segment spans residues Arg660–Thr725. A helical membrane pass occupies residues Ile726–Ala750. The Vacuolar segment spans residues Gln751 to Ala771. The helical transmembrane segment at Gly772 to Glu810 threads the bilayer. At Phe811–Asp838 the chain is on the cytoplasmic side.

It belongs to the V-ATPase 116 kDa subunit family. V-ATPase is a heteromultimeric enzyme made up of two complexes: the ATP-hydrolytic V1 complex and the proton translocation V0 complex. The V1 complex consists of three catalytic AB heterodimers that form a heterohexamer, three peripheral stalks each consisting of EG heterodimers, one central rotor including subunits D and F, and the regulatory subunits C and H. The proton translocation complex V0 consists of the proton transport subunit a, a ring of proteolipid subunits c9c'', rotary subunit d, subunits e and f, and the accessory subunits ATP6AP1/Ac45 and ATP6AP2/PRR. Interacts with SPAAR. Expressed in brain (at protein level). In terms of tissue distribution, expressed heart, kidney, liver, spleen, and to a lesser extent in brain.

It is found in the cytoplasmic vesicle. The protein resides in the clathrin-coated vesicle membrane. It localises to the secretory vesicle. The protein localises to the synaptic vesicle membrane. Its subcellular location is the melanosome. In terms of biological role, subunit of the V0 complex of vacuolar(H+)-ATPase (V-ATPase), a multisubunit enzyme composed of a peripheral complex (V1) that hydrolyzes ATP and a membrane integral complex (V0) that translocates protons. V-ATPase is responsible for the acidification of various organelles, such as lysosomes, endosomes, the trans-Golgi network, and secretory granules, including synaptic vesicles. In certain cell types, can be exported to the plasma membrane, where it is involved in the acidification of the extracellular environment. Required for assembly and activity of the vacuolar ATPase. Through its action on compartment acidification, plays an essential role in neuronal development in terms of integrity and connectivity of neurons. This Bos taurus (Bovine) protein is V-type proton ATPase 116 kDa subunit a 1 (ATP6V0A1).